The primary structure comprises 341 residues: Ribosomal RNA small subunit methyltransferase H (341 aa).

Residues 47-49 (GGY), aspartate 64, phenylalanine 91, aspartate 109, and glutamine 116 contribute to the S-adenosyl-L-methionine site. Positions 292 to 319 (VAASEEEASRNPRARSAKLRAGVRTEAP) are disordered.

This sequence belongs to the methyltransferase superfamily. RsmH family.

It is found in the cytoplasm. The enzyme catalyses cytidine(1402) in 16S rRNA + S-adenosyl-L-methionine = N(4)-methylcytidine(1402) in 16S rRNA + S-adenosyl-L-homocysteine + H(+). Specifically methylates the N4 position of cytidine in position 1402 (C1402) of 16S rRNA. The sequence is that of Ribosomal RNA small subunit methyltransferase H from Rhizobium meliloti (strain 1021) (Ensifer meliloti).